The following is a 145-amino-acid chain: Large ribosomal subunit protein uL16 (145 aa).

The protein belongs to the universal ribosomal protein uL16 family. As to quaternary structure, part of the 50S ribosomal subunit.

Functionally, binds 23S rRNA and is also seen to make contacts with the A and possibly P site tRNAs. The sequence is that of Large ribosomal subunit protein uL16 from Exiguobacterium sibiricum (strain DSM 17290 / CCUG 55495 / CIP 109462 / JCM 13490 / 255-15).